The primary structure comprises 289 residues: Eukaryotic translation initiation factor 3 subunit G (289 aa).

Disordered regions lie at residues 1–31 (MSRLANSAGDWADDEEFDEAASLPPQQVISN) and 151–199 (DTMA…GEKM). One can recognise an RRM domain in the interval 209–287 (ATLRVTNVSE…LILRVEFAKK (79 aa)).

This sequence belongs to the eIF-3 subunit G family. As to quaternary structure, component of the eukaryotic translation initiation factor 3 (eIF-3) complex.

It localises to the cytoplasm. Its function is as follows. RNA-binding component of the eukaryotic translation initiation factor 3 (eIF-3) complex, which is involved in protein synthesis of a specialized repertoire of mRNAs and, together with other initiation factors, stimulates binding of mRNA and methionyl-tRNAi to the 40S ribosome. The eIF-3 complex specifically targets and initiates translation of a subset of mRNAs involved in cell proliferation. This subunit can bind 18S rRNA. The chain is Eukaryotic translation initiation factor 3 subunit G from Coccidioides immitis (strain RS) (Valley fever fungus).